We begin with the raw amino-acid sequence, 418 residues long: Glutamyl-tRNA reductase (418 aa).

Residues 49–52 (TCNR), serine 109, 114–116 (EPQ), and glutamine 120 each bind substrate. The Nucleophile role is filled by cysteine 50. 189-194 (GAGETI) serves as a coordination point for NADP(+).

Belongs to the glutamyl-tRNA reductase family. As to quaternary structure, homodimer.

It carries out the reaction (S)-4-amino-5-oxopentanoate + tRNA(Glu) + NADP(+) = L-glutamyl-tRNA(Glu) + NADPH + H(+). It participates in porphyrin-containing compound metabolism; protoporphyrin-IX biosynthesis; 5-aminolevulinate from L-glutamyl-tRNA(Glu): step 1/2. In terms of biological role, catalyzes the NADPH-dependent reduction of glutamyl-tRNA(Glu) to glutamate 1-semialdehyde (GSA). The polypeptide is Glutamyl-tRNA reductase (Escherichia coli O1:K1 / APEC).